The chain runs to 354 residues: Rhodopsin (354 aa).

Residues 1-36 (MNGTEGPYFYIPMVNTTGIVRSPYDYPQYYLVNPAA) are Extracellular-facing. N2 and N15 each carry an N-linked (GlcNAc...) asparagine glycan. Residues 37–61 (YAALGAYMFFLILVGFPINFLTLYV) form a helical membrane-spanning segment. At 62-73 (TIEHKKLRTPLN) the chain is on the cytoplasmic side. Residues 74–96 (YILLNLAVANLFMVFGGFTTTMY) traverse the membrane as a helical segment. Topologically, residues 97–110 (TSMHGYFVLGRLGC) are extracellular. C110 and C187 are joined by a disulfide. Residues 111–133 (NLEGFFATLGGEIALWSLVVLAV) traverse the membrane as a helical segment. The 'Ionic lock' involved in activated form stabilization signature appears at 134–136 (ERW). The Cytoplasmic portion of the chain corresponds to 134–152 (ERWMVVCKPISNFRFGENH). Residues 153-173 (AIMGLAMTWLMASACAVPPLV) form a helical membrane-spanning segment. The Extracellular segment spans residues 174–202 (GWSRYIPEGMQCSCGVDYYTRAEGFNNES). Residue N200 is glycosylated (N-linked (GlcNAc...) asparagine). A helical membrane pass occupies residues 203–224 (FVVYMFCCHFMIPLIIVFFCYG). Over 225–252 (RLLCAVKEAAAAQQESETTQRAEREVTR) the chain is Cytoplasmic. The helical transmembrane segment at 253–274 (MVVIMVIAFLVCWLPYASVAWW) threads the bilayer. Topologically, residues 275–286 (IFTHQGSEFGPV) are extracellular. The chain crosses the membrane as a helical span at residues 287–308 (FMTIPAFFAKSSSIYNPMIYIC). K296 bears the N6-(retinylidene)lysine mark. Over 309 to 354 (MNKQFRNCMITTLCCGKNPFEEEEGASSTASKTEASSVSSSSVSPA) the chain is Cytoplasmic. Residues C322 and C323 are each lipidated (S-palmitoyl cysteine). Residues 329 to 354 (EEEEGASSTASKTEASSVSSSSVSPA) form a disordered region. The span at 334-354 (ASSTASKTEASSVSSSSVSPA) shows a compositional bias: low complexity.

It belongs to the G-protein coupled receptor 1 family. Opsin subfamily. In terms of processing, phosphorylated on some or all of the serine and threonine residues present in the C-terminal region. Contains one covalently linked retinal chromophore.

It is found in the membrane. The protein localises to the cell projection. The protein resides in the cilium. It localises to the photoreceptor outer segment. Photoreceptor required for image-forming vision at low light intensity. While most salt water fish species use retinal as chromophore, most freshwater fish use 3-dehydroretinal, or a mixture of retinal and 3-dehydroretinal. Light-induced isomerization of 11-cis to all-trans retinal triggers a conformational change that activates signaling via G-proteins. Subsequent receptor phosphorylation mediates displacement of the bound G-protein alpha subunit by arrestin and terminates signaling. The protein is Rhodopsin (rho) of Mullus surmuletus (Striped red mullet).